A 259-amino-acid polypeptide reads, in one-letter code: Histidinol-phosphatase (259 aa).

Glutamate 66, aspartate 82, isoleucine 84, aspartate 85, and aspartate 207 together coordinate Mg(2+). A substrate-binding site is contributed by glutamate 66. Substrate is bound by residues 84-87 and aspartate 207; that span reads IDGT.

This sequence belongs to the inositol monophosphatase superfamily. Mg(2+) is required as a cofactor.

The enzyme catalyses L-histidinol phosphate + H2O = L-histidinol + phosphate. It participates in amino-acid biosynthesis; L-histidine biosynthesis; L-histidine from 5-phospho-alpha-D-ribose 1-diphosphate: step 8/9. Functionally, catalyzes the dephosphorylation of histidinol-phosphate to histidinol, the direct precursor of histidine. This chain is Histidinol-phosphatase (hisN), found in Chlorobaculum parvum (strain DSM 263 / NCIMB 8327) (Chlorobium vibrioforme subsp. thiosulfatophilum).